Reading from the N-terminus, the 142-residue chain is Small ribosomal subunit protein uS12 (142 aa).

The interval 1-44 is disordered; it reads MANGKYAARKLKQDRQKHRWSDSDYARRARGLGKKSDPLEGAPQ. Positions 11 to 27 are enriched in basic and acidic residues; it reads LKQDRQKHRWSDSDYAR.

The protein belongs to the universal ribosomal protein uS12 family. In terms of assembly, part of the 30S ribosomal subunit.

Its function is as follows. With S4 and S5 plays an important role in translational accuracy. Located at the interface of the 30S and 50S subunits. This is Small ribosomal subunit protein uS12 from Natronomonas pharaonis (strain ATCC 35678 / DSM 2160 / CIP 103997 / JCM 8858 / NBRC 14720 / NCIMB 2260 / Gabara) (Halobacterium pharaonis).